A 433-amino-acid polypeptide reads, in one-letter code: Serine--tRNA ligase (433 aa).

235 to 237 is an L-serine binding site; sequence TSE. 266-268 contacts ATP; the sequence is RSE. Glu289 is an L-serine binding site. 353–356 provides a ligand contact to ATP; it reads EISS. Position 388 (Ser388) interacts with L-serine.

The protein belongs to the class-II aminoacyl-tRNA synthetase family. Type-1 seryl-tRNA synthetase subfamily. In terms of assembly, homodimer. The tRNA molecule binds across the dimer.

The protein resides in the cytoplasm. It catalyses the reaction tRNA(Ser) + L-serine + ATP = L-seryl-tRNA(Ser) + AMP + diphosphate + H(+). The catalysed reaction is tRNA(Sec) + L-serine + ATP = L-seryl-tRNA(Sec) + AMP + diphosphate + H(+). It functions in the pathway aminoacyl-tRNA biosynthesis; selenocysteinyl-tRNA(Sec) biosynthesis; L-seryl-tRNA(Sec) from L-serine and tRNA(Sec): step 1/1. Functionally, catalyzes the attachment of serine to tRNA(Ser). Is also able to aminoacylate tRNA(Sec) with serine, to form the misacylated tRNA L-seryl-tRNA(Sec), which will be further converted into selenocysteinyl-tRNA(Sec). The polypeptide is Serine--tRNA ligase (Burkholderia ambifaria (strain MC40-6)).